The chain runs to 2090 residues: Host cell factor 1 (2090 aa).

Alanine 2 carries the N-acetylalanine modification. A Phosphoserine modification is found at serine 6. 5 Kelch repeats span residues 44–89 (LIVV…GFVC), 93–140 (RLLV…RLGH), 148–194 (KCYL…ITYG), 217–265 (KLVI…TIGN), and 266–313 (KMYV…LMDT). Glycyl lysine isopeptide (Lys-Gly) (interchain with G-Cter in ubiquitin) cross-links involve residues lysine 105, lysine 163, and lysine 244. A Glycyl lysine isopeptide (Lys-Gly) (interchain with G-Cter in SUMO2) cross-link involves residue lysine 282. Lysine 288 carries the post-translational modification N6-acetyllysine. Lysine 363 is covalently cross-linked (Glycyl lysine isopeptide (Lys-Gly) (interchain with G-Cter in ubiquitin)). In terms of domain architecture, Fibronectin type-III 1 spans 366–469 (PPARVQLVRA…TIQVLPTVPG (104 aa)). The segment at 407–434 (ATATSPTPNPVPSVPANPPKSPAPAAAA) is disordered. Residue serine 411 is modified to Phosphoserine. Pro residues predominate over residues 413-428 (TPNPVPSVPANPPKSP). The tract at residues 500-550 (LVTMRPAGQAGKAPVTVTSLPASVRMVVPTQSAQGTVIGSNPQMSGMAALA) is required for interaction with OGT. 2 positions are modified to omega-N-methylarginine: arginine 504 and arginine 524. Phosphoserine occurs at positions 598, 666, and 669. An interaction with SIN3A region spans residues 610-722 (LKTAAAQVGT…KGPLPAGTIL (113 aa)). Residues 750–902 (ILGISSVSPS…SLAGAGAHST (153 aa)) are interaction with ZBTB17. Lysine 813 is modified (N6-acetyllysine). The segment at 813-912 (KIITAVPKIA…SASLATPITT (100 aa)) is interaction with GABP2. HCF repeat repeat units lie at residues 1010 to 1035 (TLVCSNPPCETHETGTTNTATTTVVA), 1072 to 1097 (VRVCSNPPCETHETGTTNTATTATSN), and 1101 to 1126 (QHGCSNPPCETHETGTTSTATTAMSS). Residues 1098 to 1140 (MAGQHGCSNPPCETHETGTTSTATTAMSSMGTGQQRDTRHTSS) form a disordered region. Positions 1114–1130 (TGTTSTATTAMSSMGTG) are enriched in low complexity. The HCF repeat 4; degenerate repeat unit spans residues 1157–1182 (TQGTVKPQCQTQQANMTNTTMTVQAT). Serine 1204 carries the phosphoserine modification. An Asymmetric dimethylarginine modification is found at arginine 1216. At serine 1223 the chain carries Phosphoserine. HCF repeat repeat units follow at residues 1295–1320 (TQVCSNPPCETHETGTTNTATTSNAG) and 1323–1348 (QRVCSNPPCETHETGTTHTATTATSN). Disordered regions lie at residues 1302–1374 (PCET…TTST) and 1444–1486 (TVTS…TTVS). Residues 1308 to 1321 (TGTTNTATTSNAGS) are compositionally biased toward low complexity. Residues 1358 to 1383 (QQPAGGRPCETHQTTSTGTTMSVSVG) form an HCF repeat 7; degenerate repeat. The HCF repeat 8 repeat unit spans residues 1423-1448 (QRVCSNPPCETHETGTTHTATTVTSN). The segment covering 1465–1475 (VVSTQGDSANI) has biased composition (polar residues). Low complexity predominate over residues 1476–1486 (TSSSGITTTVS). Phosphothreonine is present on threonine 1500. A phosphoserine mark is found at serine 1506, serine 1559, and serine 1826. Fibronectin type-III domains follow at residues 1853-1943 (PPPP…TCLP) and 1945-2061 (FPGA…TSKD). Residues lysine 1862 and lysine 1863 each participate in a glycyl lysine isopeptide (Lys-Gly) (interchain with G-Cter in ubiquitin) cross-link. Position 1893 is a phosphoserine (serine 1893). The segment at 2049-2090 (ATQVRWLQETSKDSSGTKPASKRPMSSPEMKSAPKKSKADGQ) is disordered. Lysine 2060 carries the post-translational modification N6-acetyllysine. Residue lysine 2079 forms a Glycyl lysine isopeptide (Lys-Gly) (interchain with G-Cter in SUMO2) linkage.

In terms of assembly, composed predominantly of six polypeptides ranging from 110 to 150 kDa and a minor 300 kDa polypeptide. The majority of N- and C-terminal cleavage products remain tightly, albeit non-covalently, associated. Interacts with POU2F1, CREB3, ZBTB17, EGR2, E2F4, CREBZF, SP1, GABP2, Sin3 HDAC complex (SIN3A, HDAC1, HDAC2, SUDS3), SAP30, SIN3B and FHL2. Component of a MLL1 complex, composed of at least the core components KMT2A/MLL1, ASH2L, HCFC1, WDR5 and RBBP5, as well as the facultative components BACC1, CHD8, DPY30, E2F6, HCFC2, HSP70, INO80C, KANSL1, LAS1L, MAX, MCRS1, MEN1, MGA, KAT8, PELP1, PHF20, PRP31, RING2, RUVBL1, RUVBL2, SENP3, TAF1, TAF4, TAF6, TAF7, TAF9 and TEX10. Component of a THAP1/THAP3-HCFC1-OGT complex that is required for the regulation of the transcriptional activity of RRM1. Interacts directly with THAP3 (via its HBM). Interacts (via the Kelch-repeat domain) with THAP1 (via the HBM); the interaction recruits HCHC1 to the RRM1. Interacts directly with OGT; the interaction, which requires the HCFC1 cleavage site domain, glycosylates and promotes the proteolytic processing of HCFC1 and retains OGT in the nucleus. Component of the SET1 complex, at least composed of the catalytic subunit (SETD1A or SETD1B), WDR5, WDR82, RBBP5, ASH2L, CXXC1, HCFC1 and DPY30. Component of the NSL complex at least composed of MOF/KAT8, KANSL1, KANSL2, KANSL3, MCRS1, PHF20, OGT1/OGT, WDR5 and HCFC1. Component of a complex at least composed of ZNF335, HCFC1, CCAR2, EMSY, MKI67, RBBP5, ASH2L and WDR5; the complex is formed as a result of interactions between components of a nuclear receptor-mediated transcription complex and a histone methylation complex. Within the complex interacts with ZNF335. Interacts with TET2 and TET3. Interacts with HCFC1R1. Interacts with THAP11. Interacts (via Kelch domain) with KMT2E (via HBM motif). Interacts with E2F1. Accessory scaffold component of the polycomb repressive deubiquitinase (PR-DUB) complex, at least composed of BAP1, one of ASXL1, ASXL2 or (probably) ASXL3 and one of MBD5 or MBD6; the PR-DUB core associates with a number of accessory proteins, including FOXK1, FOXK2, KDM1B, HCFC1, YY1 and OGT. Interacts with YY1 (via Gly-rich region); the interaction is direct. Interacts with BAP1 (via HBM-like motif). Post-translationally, proteolytically cleaved at one or several PPCE--THET sites within the HCF repeats. Cleavage is promoted by O-glycosylation. Further cleavage of the primary N- and C-terminal chains results in a 'trimming' and accumulation of the smaller chains. Cleavage is promoted by O-glycosylation. In terms of processing, O-glycosylated. GlcNAcylation by OGT promotes proteolytic processing. Ubiquitinated. Lys-1862 and Lys-1863 are ubiquitinated both via 'Lys-48'- and 'Lys-63'-linked polyubiquitin chains. BAP1 mediated deubiquitination of 'Lys-48'-linked polyubiquitin chains; deubiquitination by BAP1 does not seem to stabilize the protein.

Its subcellular location is the cytoplasm. The protein localises to the nucleus. Its function is as follows. Transcriptional coregulator. Serves as a scaffold protein, bridging interactions between transcription factors, including THAP11 and ZNF143, and transcriptional coregulators. Involved in control of the cell cycle. Also antagonizes transactivation by ZBTB17 and GABP2; represses ZBTB17 activation of the p15(INK4b) promoter and inhibits its ability to recruit p300. Coactivator for EGR2 and GABP2. Tethers the chromatin modifying Set1/Ash2 histone H3 'Lys-4' methyltransferase (H3K4me) and Sin3 histone deacetylase (HDAC) complexes (involved in the activation and repression of transcription respectively) together. As part of the NSL complex it may be involved in acetylation of nucleosomal histone H4 on several lysine residues. Recruits KMT2E to E2F1 responsive promoters promoting transcriptional activation and thereby facilitates G1 to S phase transition. Modulates expression of homeobox protein PDX1, perhaps acting in concert with transcription factor E2F1, thereby regulating pancreatic beta-cell growth and glucose-stimulated insulin secretion. May negatively modulate transcriptional activity of FOXO3. The chain is Host cell factor 1 from Mesocricetus auratus (Golden hamster).